Consider the following 144-residue polypeptide: Flagellar assembly factor FliW (144 aa).

Belongs to the FliW family. Monomer. One copy interacts with the each alpha-helical wing of the CsrA homodimer, yielding a FliW-CsrA(2)-FliW complex. Comparison with a CsrA-mRNA structure (2JPP) suggests CsrA cannot bind both mRNA and FliW at the same time. Interacts with flagellin.

Its subcellular location is the cytoplasm. In terms of biological role, acts as an anti-CsrA protein, binds CsrA and prevents it from repressing translation of its target genes, one of which is flagellin. Binds to flagellin and participates in the assembly of the flagellum. Functionally, allosterically inhibits CsrA binding to mRNA in a non-competitive fashion by preventing CsrA binding to the 5'-UTR. This is Flagellar assembly factor FliW from Geobacillus thermodenitrificans (strain NG80-2).